A 329-amino-acid chain; its full sequence is Ethylene-responsive transcription factor ERF117 (329 aa).

2 disordered regions span residues 25 to 51 (DATD…KPPK) and 71 to 90 (NSTG…FKGV). Polar residues predominate over residues 71–86 (NSTGNKAAGNRKTSSG). Positions 86–143 (GFKGVRRRPWGKFAAEIRNPFEKKRKWLGTFPTEEEAAEAYQKSKREFDERLGLVKQE) form a DNA-binding region, AP2/ERF.

It belongs to the AP2/ERF transcription factor family. ERF subfamily.

The protein localises to the nucleus. Its function is as follows. Probably acts as a transcriptional activator. Binds to the GCC-box pathogenesis-related promoter element. May be involved in the regulation of gene expression by stress factors and by components of stress signal transduction pathways. This is Ethylene-responsive transcription factor ERF117 (ERF117) from Arabidopsis thaliana (Mouse-ear cress).